The chain runs to 412 residues: Multifunctional CCA protein (412 aa).

Positions 8 and 11 each coordinate ATP. 2 residues coordinate CTP: glycine 8 and arginine 11. Mg(2+)-binding residues include aspartate 21 and aspartate 23. ATP contacts are provided by arginine 91, arginine 137, and arginine 140. CTP contacts are provided by arginine 91, arginine 137, and arginine 140. The HD domain occupies 228 to 329; the sequence is TGIHTLMTLS…VKLFDSIDAW (102 aa).

This sequence belongs to the tRNA nucleotidyltransferase/poly(A) polymerase family. Bacterial CCA-adding enzyme type 1 subfamily. As to quaternary structure, monomer. Can also form homodimers and oligomers. Requires Mg(2+) as cofactor. The cofactor is Ni(2+).

The enzyme catalyses a tRNA precursor + 2 CTP + ATP = a tRNA with a 3' CCA end + 3 diphosphate. It carries out the reaction a tRNA with a 3' CCA end + 2 CTP + ATP = a tRNA with a 3' CCACCA end + 3 diphosphate. Catalyzes the addition and repair of the essential 3'-terminal CCA sequence in tRNAs without using a nucleic acid template. Adds these three nucleotides in the order of C, C, and A to the tRNA nucleotide-73, using CTP and ATP as substrates and producing inorganic pyrophosphate. tRNA 3'-terminal CCA addition is required both for tRNA processing and repair. Also involved in tRNA surveillance by mediating tandem CCA addition to generate a CCACCA at the 3' terminus of unstable tRNAs. While stable tRNAs receive only 3'-terminal CCA, unstable tRNAs are marked with CCACCA and rapidly degraded. The chain is Multifunctional CCA protein from Escherichia coli O8 (strain IAI1).